The sequence spans 184 residues: Glutathione-regulated potassium-efflux system ancillary protein KefG (184 aa).

This sequence belongs to the NAD(P)H dehydrogenase (quinone) family. KefG subfamily. As to quaternary structure, interacts with KefB.

It localises to the cell inner membrane. The enzyme catalyses a quinone + NADH + H(+) = a quinol + NAD(+). It carries out the reaction a quinone + NADPH + H(+) = a quinol + NADP(+). Its function is as follows. Regulatory subunit of a potassium efflux system that confers protection against electrophiles. Required for full activity of KefB. This chain is Glutathione-regulated potassium-efflux system ancillary protein KefG, found in Yersinia enterocolitica serotype O:8 / biotype 1B (strain NCTC 13174 / 8081).